Consider the following 205-residue polypeptide: Holliday junction branch migration complex subunit RuvA (205 aa).

The interval 1-64 (MIGKLKGVVD…EDMIRLYGFR (64 aa)) is domain I. Positions 65 to 143 (SDAEREWFRL…AFAPVDPALV (79 aa)) are domain II. The tract at residues 144–152 (ALAGAVEEG) is flexible linker. The domain III stretch occupies residues 153 to 205 (AAPQPVADAVSALVNLGYPQVQAAAAIAAALKGAGEGAEAKVLIRLGLRELAR).

It belongs to the RuvA family. As to quaternary structure, homotetramer. Forms an RuvA(8)-RuvB(12)-Holliday junction (HJ) complex. HJ DNA is sandwiched between 2 RuvA tetramers; dsDNA enters through RuvA and exits via RuvB. An RuvB hexamer assembles on each DNA strand where it exits the tetramer. Each RuvB hexamer is contacted by two RuvA subunits (via domain III) on 2 adjacent RuvB subunits; this complex drives branch migration. In the full resolvosome a probable DNA-RuvA(4)-RuvB(12)-RuvC(2) complex forms which resolves the HJ.

It is found in the cytoplasm. In terms of biological role, the RuvA-RuvB-RuvC complex processes Holliday junction (HJ) DNA during genetic recombination and DNA repair, while the RuvA-RuvB complex plays an important role in the rescue of blocked DNA replication forks via replication fork reversal (RFR). RuvA specifically binds to HJ cruciform DNA, conferring on it an open structure. The RuvB hexamer acts as an ATP-dependent pump, pulling dsDNA into and through the RuvAB complex. HJ branch migration allows RuvC to scan DNA until it finds its consensus sequence, where it cleaves and resolves the cruciform DNA. The polypeptide is Holliday junction branch migration complex subunit RuvA (Methylobacterium radiotolerans (strain ATCC 27329 / DSM 1819 / JCM 2831 / NBRC 15690 / NCIMB 10815 / 0-1)).